Here is a 305-residue protein sequence, read N- to C-terminus: 17-beta-hydroxysteroid dehydrogenase type 3 (305 aa).

44-73 serves as a coordination point for NADP(+); the sequence is GQWAVITGAGDGIGKAYSFELARHGLNVVL. Ser-181 contacts substrate. The Proton acceptor role is filled by Tyr-194.

This sequence belongs to the short-chain dehydrogenases/reductases (SDR) family. 17-beta-HSD 3 subfamily. As to expression, expressed in the testes.

Its subcellular location is the endoplasmic reticulum. The catalysed reaction is a 17beta-hydroxy steroid + NADP(+) = a 17-oxo steroid + NADPH + H(+). The enzyme catalyses testosterone + NADP(+) = androst-4-ene-3,17-dione + NADPH + H(+). It catalyses the reaction 17beta-estradiol + NADP(+) = estrone + NADPH + H(+). It carries out the reaction 3beta-hydroxyandrost-5-en-17-one + NADPH + H(+) = androst-5-en-3beta,17beta-diol + NADP(+). The catalysed reaction is 17beta-hydroxy-5alpha-androstan-3-one + NADP(+) = 5alpha-androstan-3,17-dione + NADPH + H(+). The enzyme catalyses androsterone + NADPH + H(+) = 5alpha-androstane-3alpha,17beta-diol + NADP(+). It catalyses the reaction 3beta-hydroxy-5alpha-androstan-17-one + NADPH + H(+) = 5alpha-androstane-3beta,17beta-diol + NADP(+). It carries out the reaction androst-4-ene-3,11,17-trione + NADPH + H(+) = 17beta-hydroxyandrost-4-ene-3,11-dione + NADP(+). The catalysed reaction is 11beta-hydroxyandrost-4-ene-3,17-dione + NADPH + H(+) = 11beta,17beta-dihydroxyandrost-4-ene-3-one + NADP(+). It functions in the pathway hormone biosynthesis; testosterone biosynthesis. Its pathway is steroid metabolism. Functionally, catalyzes the conversion of 17-oxosteroids to 17beta-hydroxysteroids. Favors the reduction of androstenedione to testosterone. Testosterone is the key androgen driving male development and function. Uses NADPH while the two other EDH17B enzymes use NADH. Androgens such as epiandrosterone, dehydroepiandrosterone, androsterone and androstanedione are accepted as substrates and reduced at C-17. Can reduce 11-ketoandrostenedione as well as 11beta-hydroxyandrostenedione at C-17 to the respective testosterone forms. Plays a role in the rate-limiting-step for the maximum level of testosterone production by the testis but does not affect basal testosterone production. The sequence is that of 17-beta-hydroxysteroid dehydrogenase type 3 from Mus musculus (Mouse).